Reading from the N-terminus, the 1256-residue chain is MVRLREIPRTATFAWSPGPTQPLIATGTKAGAVDADFSNDTQLELWELKLDDAEQGVELQPVATVSVDSRFNDIAWSQPSEQHPRGIIAGALDSGALVLWDAEKLRTGASDAQIDQIDKHTGPIQAIQFNPFRPNILASAGAKGELFVHDLDDESKSFRLGKAGANPDEYTTLDWNKKVAHILATGSSGGFVTVWDVKGKKENLTLNHFGRKTVSAVSWDPDVPTRLVTAIPTDQNPLVLAHDQGVLSLSWCPQDSDILLSCGKDNRTIAWNPHSGEQLGRISGRDKLDLPDQIQPVEPEPYSRPASFDGKIAVQTLQNTGANADQSKTAKQAPEGEDFFAQTHAEPQGASFSLKSPPKWLKRRAGVAFGFGGKLVRFGVVDAKSKITISTFAVDSDISQASEDFDKALETGDLTSILESKISKAATDEEKADWTVIETLTSDNPRTKLVEYLGFADQSEEAPAEVKKEAQTNGDADEGSSFFDNATDEGNFLSDLAARKGAKTNNPFQVYTGSESEADTKITRALMLGNFDAALDVCLKENRLSDAFMIAICGGEKCVAKAQAAYFKRQSDAPNYLRLLASVVGKNLWDFVYNADLKDWKEVMATICTFADQAEFPDLCEALGDRLEEAIAEGTTSYRKDASFCYLAGSKLEKVVVNWAQELQENENAGLEQSETDNSFSIHARSLQDFIEKVTVFRKVTQFKDTEQSKENDWKLEPLYAKYVEYADIASAHGQLAIAEKYLDLLPQKYPAADVARNRVKQATRKGAAPAAAGQRQSQPAAAQRGQRVVPAYGAPAPQPTPAQRTASPYAPANPLAPAQTNSPYAPVNPLSQQAQQATQQPPARAGGAYTPAGYQPAPVQQGYGGYGQQQQAPLAPPPQNFSNPNGPSIVPAANRGHIPAWNDTPDFGPPKTASRRGTPLNAVASPFPNQQQNYGPPGGASPGFPPQSRPTPPPPPKGPPQGPPRMTSPPSQAGGAPPNAPNPYAPSPAANNYAPPPSGFAPPQQAPVQRGASPYQPPQSAAPPSNRYAPAPGSQPSAPSGMGGMPPPRNIAPPPGQFTPGASAYAPSPYAQSPAQQAPAAVAPPPRGPPQGPPRAGPPPGGPPQGGPPRPESRPGTGQSQPAAPAAARYPPGDREHIPMVSRPIYEILGAEIQRVKAKAPAQYKAHVTDTEKRLNILFDHLNNEDLLKPDTIQQMNELASNIQAKQFDEAIAIFQDLMTNKNDEGSNWLVSDVITFDADVGVKRLIQFSKSTPA.

WD repeat units follow at residues 7–47 (IPRT…ELWE), 66–110 (SVDS…TGAS), 119–159 (KHTG…KSFR), 165–205 (ANPD…ENLT), 209–241 (FGRK…LVLA), and 242–281 (HDQG…QLGR). The WD 7; interaction with SEC13 repeat unit spans residues 368 to 390 (AFGFGGKLVRFGVVDAKSKITIS). Disordered stretches follow at residues 460–481 (EEAP…EGSS) and 761–1139 (KQAT…REHI). Low complexity-rich tracts occupy residues 765–809 (RKGA…TASP) and 833–862 (QQAQ…PVQQ). Residues 944 to 968 (GFPPQSRPTPPPPPKGPPQGPPRMT) show a composition bias toward pro residues. 2 stretches are compositionally biased toward low complexity: residues 969 to 978 (SPPSQAGGAP) and 1023 to 1041 (APPS…SAPS). Residues 1046 to 1058 (MPPPRNIAPPPGQ) show a composition bias toward pro residues. A compositionally biased stretch (low complexity) spans 1061 to 1082 (PGASAYAPSPYAQSPAQQAPAA). Residues 1083 to 1111 (VAPPPRGPPQGPPRAGPPPGGPPQGGPPR) show a composition bias toward pro residues. The span at 1123–1132 (PAAPAAARYP) shows a compositional bias: low complexity.

Belongs to the WD repeat SEC31 family. The COPII coat is composed of at least 5 proteins: the SEC23/24 complex, the SEC13/31 complex, and the protein SAR1. SEC13 and SEC31 make a 2:2 tetramer that forms the edge element of the COPII outer coat. The tetramer self-assembles in multiple copies to form the complete polyhedral cage. Interacts (via WD 7) with SEC13.

The protein resides in the cytoplasmic vesicle. Its subcellular location is the COPII-coated vesicle membrane. It is found in the endoplasmic reticulum membrane. In terms of biological role, component of the coat protein complex II (COPII) which promotes the formation of transport vesicles from the endoplasmic reticulum (ER). The coat has two main functions, the physical deformation of the endoplasmic reticulum membrane into vesicles and the selection of cargo molecules. The chain is Protein transport protein SEC31 (SEC31) from Phaeosphaeria nodorum (strain SN15 / ATCC MYA-4574 / FGSC 10173) (Glume blotch fungus).